Here is a 66-residue protein sequence, read N- to C-terminus: SPbeta prophage-derived uncharacterized protein YosK (66 aa).

The protein is SPbeta prophage-derived uncharacterized protein YosK (yosK) of Bacillus subtilis (strain 168).